A 483-amino-acid chain; its full sequence is Glycogen synthase (483 aa).

Lysine 15 serves as a coordination point for ADP-alpha-D-glucose.

It belongs to the glycosyltransferase 1 family. Bacterial/plant glycogen synthase subfamily.

The catalysed reaction is [(1-&gt;4)-alpha-D-glucosyl](n) + ADP-alpha-D-glucose = [(1-&gt;4)-alpha-D-glucosyl](n+1) + ADP + H(+). It functions in the pathway glycan biosynthesis; glycogen biosynthesis. Synthesizes alpha-1,4-glucan chains using ADP-glucose. The chain is Glycogen synthase from Desulfatibacillum aliphaticivorans.